The following is a 205-amino-acid chain: Guanylate kinase (205 aa).

The Guanylate kinase-like domain occupies 18–196; that stretch reads PKLFTISAPA…AYQVLRSIFI (179 aa). 25 to 32 is a binding site for ATP; it reads APAGAGKT.

It belongs to the guanylate kinase family.

The protein resides in the cytoplasm. The catalysed reaction is GMP + ATP = GDP + ADP. In terms of biological role, essential for recycling GMP and indirectly, cGMP. This Chlamydia muridarum (strain MoPn / Nigg) protein is Guanylate kinase (gmk).